Reading from the N-terminus, the 604-residue chain is Integrin alpha-IIb (604 aa).

One copy of the FG-GAP repeat lies at 1–61 (QVLDSPFPTG…ASVQLLVQDS (61 aa)). Residues 1–558 (QVLDSPFPTG…TQLLRALEER (558 aa)) are Extracellular-facing. Positions 22, 24, 26, 28, and 30 each coordinate Ca(2+). 2 cysteine pairs are disulfide-bonded: C69–C80 and C86–C141. Residue N166 is glycosylated (N-linked (GlcNAc...) asparagine). Disulfide bonds link C198–C204, C270–C283, C422–C486, and C476–C481. An N-linked (GlcNAc...) asparagine glycan is attached at N276. The N-linked (GlcNAc...) asparagine glycan is linked to N527. A helical transmembrane segment spans residues 559–584 (AIPIWWVLVGVLGGLLLLTILVLAMW). Residues 585 to 604 (KVGFFKRNRPPLEEDDEEGE) are Cytoplasmic-facing. The short motif at 587 to 591 (GFFKR) is the GFFKR motif element.

It belongs to the integrin alpha chain family. Heterodimer of an alpha and a beta subunit. The alpha subunit is composed of a heavy and a light chain linked by a disulfide bond. Alpha-IIb associates with beta-3. Directly interacts with RNF181. Interacts (via C-terminus cytoplasmic tail region) with CIB1; the interaction is direct and calcium-dependent. Interacts (via C-terminus cytoplasmic tail region) with CIB2, CIB3 and CIB4; the interactions are stabilized/increased in a calcium and magnesium-dependent manner. ITGA2B:ITGB3 interacts with PPIA/CYPA; the interaction is ROS and PPIase activity-dependent and is increased in the presence of thrombin. ITGA2B:ITGB3 interacts with SELP (via C-type lectin domain); the interaction mediates cell-cell interaction and adhesion.

The protein localises to the membrane. In terms of biological role, integrin alpha-IIb/beta-3 is a receptor for fibronectin, fibrinogen, plasminogen, prothrombin, thrombospondin and vitronectin. It recognizes the sequence R-G-D in a wide array of ligands. It recognizes the sequence H-H-L-G-G-G-A-K-Q-A-G-D-V in fibrinogen gamma chain. Following activation integrin alpha-IIb/beta-3 brings about platelet/platelet interaction through binding of soluble fibrinogen. This step leads to rapid platelet aggregation which physically plugs ruptured endothelial cell surface. The chain is Integrin alpha-IIb (ITGA2B) from Papio cynocephalus (Yellow baboon).